A 403-amino-acid polypeptide reads, in one-letter code: O-succinylhomoserine sulfhydrylase (403 aa).

Residue K219 is modified to N6-(pyridoxal phosphate)lysine.

It belongs to the trans-sulfuration enzymes family. MetZ subfamily. As to quaternary structure, homotetramer. The cofactor is pyridoxal 5'-phosphate.

It carries out the reaction O-succinyl-L-homoserine + hydrogen sulfide = L-homocysteine + succinate. Its pathway is amino-acid biosynthesis; L-methionine biosynthesis via de novo pathway; L-homocysteine from O-succinyl-L-homoserine: step 1/1. Catalyzes the formation of L-homocysteine from O-succinyl-L-homoserine (OSHS) and hydrogen sulfide. Cannot use the other activated form of L-homoserine, O-acetyl-L-homoserine, as a substrate. This is O-succinylhomoserine sulfhydrylase from Pseudomonas aeruginosa (strain ATCC 15692 / DSM 22644 / CIP 104116 / JCM 14847 / LMG 12228 / 1C / PRS 101 / PAO1).